The chain runs to 166 residues: Large ribosomal subunit protein uL10 (166 aa).

Belongs to the universal ribosomal protein uL10 family. In terms of assembly, part of the ribosomal stalk of the 50S ribosomal subunit. The N-terminus interacts with L11 and the large rRNA to form the base of the stalk. The C-terminus forms an elongated spine to which L12 dimers bind in a sequential fashion forming a multimeric L10(L12)X complex.

In terms of biological role, forms part of the ribosomal stalk, playing a central role in the interaction of the ribosome with GTP-bound translation factors. This chain is Large ribosomal subunit protein uL10, found in Pseudomonas paraeruginosa (strain DSM 24068 / PA7) (Pseudomonas aeruginosa (strain PA7)).